Consider the following 208-residue polypeptide: dITP/XTP pyrophosphatase (208 aa).

Thr-11–Lys-16 provides a ligand contact to substrate. Asp-73 functions as the Proton acceptor in the catalytic mechanism. Asp-73 is a binding site for Mg(2+). Residues Ser-74, Phe-157–Asp-160, Lys-180, and His-185–Arg-186 each bind substrate.

This sequence belongs to the HAM1 NTPase family. Homodimer. Requires Mg(2+) as cofactor.

It carries out the reaction XTP + H2O = XMP + diphosphate + H(+). The catalysed reaction is dITP + H2O = dIMP + diphosphate + H(+). It catalyses the reaction ITP + H2O = IMP + diphosphate + H(+). In terms of biological role, pyrophosphatase that catalyzes the hydrolysis of nucleoside triphosphates to their monophosphate derivatives, with a high preference for the non-canonical purine nucleotides XTP (xanthosine triphosphate), dITP (deoxyinosine triphosphate) and ITP. Seems to function as a house-cleaning enzyme that removes non-canonical purine nucleotides from the nucleotide pool, thus preventing their incorporation into DNA/RNA and avoiding chromosomal lesions. In Rhodopirellula baltica (strain DSM 10527 / NCIMB 13988 / SH1), this protein is dITP/XTP pyrophosphatase.